The primary structure comprises 240 residues: MEKKNCNPKETSSQKASDKNHLTLKNSLLKDIDFYLVTDSGLSKKGTLSDVKESVEAGCKIVQYREKCKSTGEMIDEAAEIKKICSGRAIFLINDRIDVALVVDADGVHIGQDDMPIETARKILGANKIIGLTVHNADEAIEAEKSGADYVGLGSIFDTFTKKDAGKGIGPASIREVRNAIKISVVAIGGINKENCRSVIENGADSLVAISAVVCSDDVKKETREFIDIIREIKGTGSSK.

4-amino-2-methyl-5-(diphosphooxymethyl)pyrimidine contacts are provided by residues 63 to 67 (QYREK) and N94. Residues D95 and D114 each contribute to the Mg(2+) site. Position 133 (T133) interacts with 4-amino-2-methyl-5-(diphosphooxymethyl)pyrimidine. 2-[(2R,5Z)-2-carboxy-4-methylthiazol-5(2H)-ylidene]ethyl phosphate is bound at residue 159-161 (TFT). Residue K162 participates in 4-amino-2-methyl-5-(diphosphooxymethyl)pyrimidine binding. 2-[(2R,5Z)-2-carboxy-4-methylthiazol-5(2H)-ylidene]ethyl phosphate is bound by residues G190 and 210–211 (IS).

The protein belongs to the thiamine-phosphate synthase family. It depends on Mg(2+) as a cofactor.

The catalysed reaction is 2-[(2R,5Z)-2-carboxy-4-methylthiazol-5(2H)-ylidene]ethyl phosphate + 4-amino-2-methyl-5-(diphosphooxymethyl)pyrimidine + 2 H(+) = thiamine phosphate + CO2 + diphosphate. The enzyme catalyses 2-(2-carboxy-4-methylthiazol-5-yl)ethyl phosphate + 4-amino-2-methyl-5-(diphosphooxymethyl)pyrimidine + 2 H(+) = thiamine phosphate + CO2 + diphosphate. It catalyses the reaction 4-methyl-5-(2-phosphooxyethyl)-thiazole + 4-amino-2-methyl-5-(diphosphooxymethyl)pyrimidine + H(+) = thiamine phosphate + diphosphate. Its pathway is cofactor biosynthesis; thiamine diphosphate biosynthesis; thiamine phosphate from 4-amino-2-methyl-5-diphosphomethylpyrimidine and 4-methyl-5-(2-phosphoethyl)-thiazole: step 1/1. Condenses 4-methyl-5-(beta-hydroxyethyl)thiazole monophosphate (THZ-P) and 2-methyl-4-amino-5-hydroxymethyl pyrimidine pyrophosphate (HMP-PP) to form thiamine monophosphate (TMP). The chain is Thiamine-phosphate synthase from Methanosarcina mazei (strain ATCC BAA-159 / DSM 3647 / Goe1 / Go1 / JCM 11833 / OCM 88) (Methanosarcina frisia).